The following is a 204-amino-acid chain: SOSS complex subunit B homolog (204 aa).

Positions 24–94 (IVLEVGVATV…TLYSGKNGEV (71 aa)) form a DNA-binding region, OB. Positions 115–204 (RAEQQAVANP…GRGGLKGERR (90 aa)) are disordered. Composition is skewed to low complexity over residues 122 to 131 (ANPAATPAGL) and 139 to 183 (GLPA…QTTT). The span at 187–198 (TRGGRGGGGRGG) shows a compositional bias: gly residues.

Belongs to the SOSS-B family.

In Drosophila melanogaster (Fruit fly), this protein is SOSS complex subunit B homolog.